The sequence spans 219 residues: Octanoyltransferase (219 aa).

A BPL/LPL catalytic domain is found at 31 to 206 (DEDVDQIWLV…ELVELLGYDQ (176 aa)). Residues 70 to 77 (RGGQVTYH), 137 to 139 (SLG), and 150 to 152 (GLA) each bind substrate. C168 serves as the catalytic Acyl-thioester intermediate.

Belongs to the LipB family.

Its subcellular location is the cytoplasm. It carries out the reaction octanoyl-[ACP] + L-lysyl-[protein] = N(6)-octanoyl-L-lysyl-[protein] + holo-[ACP] + H(+). Its pathway is protein modification; protein lipoylation via endogenous pathway; protein N(6)-(lipoyl)lysine from octanoyl-[acyl-carrier-protein]: step 1/2. Functionally, catalyzes the transfer of endogenously produced octanoic acid from octanoyl-acyl-carrier-protein onto the lipoyl domains of lipoate-dependent enzymes. Lipoyl-ACP can also act as a substrate although octanoyl-ACP is likely to be the physiological substrate. In Vibrio atlanticus (strain LGP32) (Vibrio splendidus (strain Mel32)), this protein is Octanoyltransferase.